The sequence spans 183 residues: Shikimate kinase (183 aa).

An ATP-binding site is contributed by 14–19 (GAGKTT). Residue Thr18 coordinates Mg(2+). Substrate contacts are provided by Asp36, Arg60, and Gly82. Arg120 lines the ATP pocket. A substrate-binding site is contributed by Arg139. Gln156 is an ATP binding site.

This sequence belongs to the shikimate kinase family. As to quaternary structure, monomer. Mg(2+) serves as cofactor.

The protein localises to the cytoplasm. The enzyme catalyses shikimate + ATP = 3-phosphoshikimate + ADP + H(+). It functions in the pathway metabolic intermediate biosynthesis; chorismate biosynthesis; chorismate from D-erythrose 4-phosphate and phosphoenolpyruvate: step 5/7. Its function is as follows. Catalyzes the specific phosphorylation of the 3-hydroxyl group of shikimic acid using ATP as a cosubstrate. The polypeptide is Shikimate kinase (Thiobacillus denitrificans (strain ATCC 25259 / T1)).